The primary structure comprises 70 residues: Drosomycin (70 aa).

Residues 1-20 form the signal peptide; that stretch reads MMQIKYLFALFAVLMLVVLG. The propeptide occupies 21 to 26; sequence ANEADA. 4 disulfides stabilise this stretch: C28–C70, C37–C59, C45–C65, and C49–C67. N42 is a glycosylation site (N-linked (GlcNAc...) asparagine).

Hemolymph (at protein level). Synthesized in the fat body and is secreted into the blood. In larvae, expressed in the visceral branches and posterior spiracles of the trachea.

It localises to the secreted. Its function is as follows. Possesses antifungal activity and is active against a relatively broad spectrum of filamentous fungi. It inhibits spore germination at high concentrations and at low concentrations delays growth of hyphae which subsequently exhibit abnormal morphology. Spz C-106 in the hemolymph controls expression of the antifungal peptide by acting as a ligand of Tl and inducing an intracellular signaling pathway. Part of a psh-dependent Toll pathway, which may function in activating the systematic immune response in response to localized melanization of the tracheal system. This chain is Drosomycin (Drs), found in Drosophila melanogaster (Fruit fly).